The chain runs to 108 residues: Nascent polypeptide-associated complex protein (108 aa).

The NAC-A/B domain occupies 1-68 (MNPREIRRMM…LREVKKEVEQ (68 aa)).

The protein belongs to the NAC-alpha family. In terms of assembly, homodimer. Interacts with the ribosome. Binds ribosomal RNA.

Contacts the emerging nascent chain on the ribosome. The sequence is that of Nascent polypeptide-associated complex protein from Picrophilus torridus (strain ATCC 700027 / DSM 9790 / JCM 10055 / NBRC 100828 / KAW 2/3).